The sequence spans 248 residues: MGYNKSLRYSRHEGTTCVIDNHHLKSLGSVLHDVRRKKDRIREAEYEPIIDLADQYMVTEDPFRGPGKNVRITLFKEIRRVQPDTMKLVCNWSGKEFLRETWTRFISEEFPITTDQEIMDLWFELQLRPMHPNRCYKFTMQYALCTHPDYIAHDVIRQQDPYFVGPNNIERINLTKKGFAFPLTCLQSVYNDNFEGFFEDVLWPYFHRPLVYVGTTSGEIEEIMIEVSLLFKIKEFAPDVPLFTGPAY.

This sequence belongs to the polyhedrin family.

Component of the virus occlusion bodies, which are large proteinaceous structures, that protect the virus from the outside environment for extended periods until they are ingested by insect larvae. The chain is Granulin from Zygaenidae (burnets).